A 530-amino-acid polypeptide reads, in one-letter code: Autoinducer-2 kinase (530 aa).

This sequence belongs to the FGGY kinase family.

It is found in the cytoplasm. The catalysed reaction is (S)-4,5-dihydroxypentane-2,3-dione + ATP = (2S)-2-hydroxy-3,4-dioxopentyl phosphate + ADP + H(+). In terms of biological role, catalyzes the phosphorylation of autoinducer-2 (AI-2) to phospho-AI-2, which subsequently inactivates the transcriptional regulator LsrR and leads to the transcription of the lsr operon. Phosphorylates the ring-open form of (S)-4,5-dihydroxypentane-2,3-dione (DPD), which is the precursor to all AI-2 signaling molecules, at the C5 position. This chain is Autoinducer-2 kinase, found in Escherichia coli O9:H4 (strain HS).